The following is a 114-amino-acid chain: Histone H3-6 (114 aa).

A compositionally biased stretch (basic residues) spans 1–17; it reads NTGGKAPRKHIAHKQAK. Residues 1 to 32 form a disordered region; that stretch reads NTGGKAPRKHIAHKQAKKSSAAAATGGVKKPH. The segment covering 18–28 has biased composition (low complexity); it reads KSSAAAATGGV.

Belongs to the histone H3 family. As to quaternary structure, the nucleosome is a histone octamer containing two molecules each of H2A, H2B, H3 and H4 assembled in one H3-H4 heterotetramer and two H2A-H2B heterodimers. The octamer wraps approximately 147 bp of DNA.

The protein resides in the nucleus. Its subcellular location is the chromosome. In terms of biological role, core component of nucleosome. Nucleosomes wrap and compact DNA into chromatin, limiting DNA accessibility to the cellular machineries which require DNA as a template. Histones thereby play a central role in transcription regulation, DNA repair, DNA replication and chromosomal stability. DNA accessibility is regulated via a complex set of post-translational modifications of histones, also called histone code, and nucleosome remodeling. The polypeptide is Histone H3-6 (H3-6) (Stylonychia lemnae (Ciliate)).